A 241-amino-acid polypeptide reads, in one-letter code: Nickel import ATP-binding protein LarO (241 aa).

The region spanning 2–240 (IKLVNICYDY…QPARQAQLMT (239 aa)) is the ABC transporter domain. Residue 34–41 (GPNGSGKS) participates in ATP binding.

The protein belongs to the ABC transporter superfamily. In terms of assembly, may form an energy-coupling factor (ECF) transporter complex composed of an ATP-binding protein (A component, LarO), a transmembrane protein (T component, LarQ) and a fused possible substrate-capture protein (S component, LarMN) of unknown stoichiometry.

It localises to the cell membrane. Functionally, probable ATP-binding component of the energy-coupling factor (ECF) transporter complex LarMNQO involved in nickel import. LarO is presumably responsible for energy coupling to the transport system. The protein is Nickel import ATP-binding protein LarO of Lactiplantibacillus plantarum (strain ATCC BAA-793 / NCIMB 8826 / WCFS1) (Lactobacillus plantarum).